The sequence spans 264 residues: MTERSFDSFEVVENGLTEEQILQNPDCLISSHDENHPANVICKLCEQFFHNNWCTGTGGGISIKDPKTNYLYIAPSGVQKEKMKREDLFVLNETGDKCLRKPSMYKPSACTPLFLACYKLRNAGAIIHTHSQHAVMCSLIFKDVFRISNIEQIKAIPSGKIDPVTNKQIALSFFDTLEIPIIENMAHEDQLIDSFHDIFKRWPHTQAIIVRRHGIFVWGSDINKAKIYNEAIDYLMELAVKMYQIGIPPDCGIGEEKRYLEMPM.

Residue C110 coordinates substrate. The Zn(2+) site is built by H128 and H130. Residue E151 is the Proton donor/acceptor of the active site. Zn(2+) is bound at residue H213.

Belongs to the aldolase class II family. MtnB subfamily. The cofactor is Zn(2+).

It localises to the cytoplasm. The catalysed reaction is 5-(methylsulfanyl)-D-ribulose 1-phosphate = 5-methylsulfanyl-2,3-dioxopentyl phosphate + H2O. It functions in the pathway amino-acid biosynthesis; L-methionine biosynthesis via salvage pathway; L-methionine from S-methyl-5-thio-alpha-D-ribose 1-phosphate: step 2/6. Its function is as follows. Catalyzes the dehydration of methylthioribulose-1-phosphate (MTRu-1-P) into 2,3-diketo-5-methylthiopentyl-1-phosphate (DK-MTP-1-P). This Vanderwaltozyma polyspora (strain ATCC 22028 / DSM 70294 / BCRC 21397 / CBS 2163 / NBRC 10782 / NRRL Y-8283 / UCD 57-17) (Kluyveromyces polysporus) protein is Methylthioribulose-1-phosphate dehydratase.